The following is a 461-amino-acid chain: MSIGKIVKVIGAVVDVEFEQGKGPKVYDALKINDGSDGSLMLEVQQQLGGGVVRCIAMGSSDGLKRGLEVESTGNPITVPVGEETLGRIMNVLGHPIDECGPIGEQVSYEIHRDAPSYEEQSNSTALLETGVKVIDLICPFAKGGKIGLFGGAGVGKTVNMMELINNIAKAHSGLSVFTGVGERTREGNDFYYEMKEAGVLDKVAMVYGQMNEPPGNRLRVALTGLTIAERFRDEGRDVLLFVDNIYRYTLAGTEVSALLGRMPSAVGYQPTLAEEMGVLQERITSTKNGSITSIQAVYVPADDLTDPSPATTFAHLDATVVLSRNIAALGLYPAIDPLDSTSRQLDPQVVGQEHYDVARKVQQTLQRYKELKDIIAILGMDELSEEDKRLVSRARKVERFLTQPYHVAEVFTGQPGVFVPLKDTIAGFKALLDGQYDDIPEQAFMYCGNIDEVLEKAKKL.

151-158 (GGAGVGKT) is a binding site for ATP.

Belongs to the ATPase alpha/beta chains family. As to quaternary structure, F-type ATPases have 2 components, CF(1) - the catalytic core - and CF(0) - the membrane proton channel. CF(1) has five subunits: alpha(3), beta(3), gamma(1), delta(1), epsilon(1). CF(0) has three main subunits: a(1), b(2) and c(9-12). The alpha and beta chains form an alternating ring which encloses part of the gamma chain. CF(1) is attached to CF(0) by a central stalk formed by the gamma and epsilon chains, while a peripheral stalk is formed by the delta and b chains.

It is found in the cell inner membrane. The enzyme catalyses ATP + H2O + 4 H(+)(in) = ADP + phosphate + 5 H(+)(out). Produces ATP from ADP in the presence of a proton gradient across the membrane. The catalytic sites are hosted primarily by the beta subunits. The protein is ATP synthase subunit beta 2 of Vibrio campbellii (strain ATCC BAA-1116).